Here is a 544-residue protein sequence, read N- to C-terminus: Cytochrome P450 2U1 (544 aa).

4 helical membrane-spanning segments follow: residues 30–50, 113–133, 261–281, and 342–362; these read LDPSGGALLLCGLVALLGWSW, VYGSIFSFFIGHYLVVVLSDF, ICLNSQVLLVNICPWLYYLPF, and LFYIIGDLFIAGTDTTTNSLL. A heme-binding site is contributed by Cys490. The chain crosses the membrane as a helical span at residues 495 to 515; sequence LAKMELFLMFVSLMQSFAFAL.

It belongs to the cytochrome P450 family. Heme is required as a cofactor. As to expression, widely expressed with stronger expression in thymus, heart and cerebellum.

It localises to the endoplasmic reticulum membrane. It is found in the microsome membrane. The protein localises to the mitochondrion inner membrane. The catalysed reaction is an omega-methyl-long-chain fatty acid + reduced [NADPH--hemoprotein reductase] + O2 = an omega-hydroxy-long-chain fatty acid + oxidized [NADPH--hemoprotein reductase] + H2O + H(+). It catalyses the reaction (5Z,8Z,11Z,14Z)-eicosatetraenoate + reduced [NADPH--hemoprotein reductase] + O2 = 19-hydroxy-(5Z,8Z,11Z,14Z)-eicosatetraenoate + oxidized [NADPH--hemoprotein reductase] + H2O + H(+). The enzyme catalyses (5Z,8Z,11Z,14Z)-eicosatetraenoate + reduced [NADPH--hemoprotein reductase] + O2 = 20-hydroxy-(5Z,8Z,11Z,14Z)-eicosatetraenoate + oxidized [NADPH--hemoprotein reductase] + H2O + H(+). It carries out the reaction N-[(5Z,8Z,11Z,14Z)-eicosatetraenoyl]-serotonin + reduced [NADPH--hemoprotein reductase] + O2 = 2-oxo-N-[(5Z,8Z,11Z,14Z)-eicosatetraenoyl]-serotonin + oxidized [NADPH--hemoprotein reductase] + H2O + H(+). It functions in the pathway lipid metabolism; arachidonate metabolism. Functionally, a cytochrome P450 monooxygenase involved in the metabolism of arachidonic acid and its conjugates. Mechanistically, uses molecular oxygen inserting one oxygen atom into a substrate, and reducing the second into a water molecule, with two electrons provided by NADPH via cytochrome P450 reductase (CPR; NADPH-ferrihemoprotein reductase). Acts as an omega and omega-1 hydroxylase for arachidonic acid and possibly for other long chain fatty acids. May modulate the arachidonic acid signaling pathway and play a role in other fatty acid signaling processes. May down-regulate the biological activities of N-arachidonoyl-serotonin, an endocannabinoid that has anti-nociceptive effects through inhibition of fatty acid amide hydrolase FAAH, TRPV1 receptor and T-type calcium channels. Catalyzes C-2 oxidation of the indole ring of N-arachidonoyl-serotonin forming a less active product 2-oxo-N-arachidonoyl-serotonin. The sequence is that of Cytochrome P450 2U1 from Homo sapiens (Human).